The following is a 506-amino-acid chain: Probable cytosol aminopeptidase (506 aa).

Residues Lys270 and Asp275 each contribute to the Mn(2+) site. The active site involves Lys282. Residues Asp293, Asp352, and Glu354 each coordinate Mn(2+). The active site involves Arg356.

Belongs to the peptidase M17 family. Mn(2+) serves as cofactor.

The protein localises to the cytoplasm. The enzyme catalyses Release of an N-terminal amino acid, Xaa-|-Yaa-, in which Xaa is preferably Leu, but may be other amino acids including Pro although not Arg or Lys, and Yaa may be Pro. Amino acid amides and methyl esters are also readily hydrolyzed, but rates on arylamides are exceedingly low.. The catalysed reaction is Release of an N-terminal amino acid, preferentially leucine, but not glutamic or aspartic acids.. In terms of biological role, presumably involved in the processing and regular turnover of intracellular proteins. Catalyzes the removal of unsubstituted N-terminal amino acids from various peptides. The sequence is that of Probable cytosol aminopeptidase from Photorhabdus laumondii subsp. laumondii (strain DSM 15139 / CIP 105565 / TT01) (Photorhabdus luminescens subsp. laumondii).